Here is a 435-residue protein sequence, read N- to C-terminus: Glucoside xylosyltransferase 1 (435 aa).

The Cytoplasmic segment spans residues 1–6 (MRRYLR). A helical; Signal-anchor for type II membrane protein transmembrane segment spans residues 7–29 (VVGLCLACGFCSLLYAFSQLAVS). Topologically, residues 30-435 (LEEGAAVGRR…NRYDTPPKER (406 aa)) are lumenal. N-linked (GlcNAc...) asparagine glycosylation is found at N168 and N232.

Belongs to the glycosyltransferase 8 family.

The protein resides in the membrane. It catalyses the reaction 3-O-(beta-D-glucosyl)-L-seryl-[EGF-like domain protein] + UDP-alpha-D-xylose = 3-O-[alpha-D-xylosyl-(1-&gt;3)-beta-D-glucosyl]-L-seryl-[EGF-like domain protein] + UDP + H(+). Glycosyltransferase which elongates the O-linked glucose attached to EGF-like repeats in the extracellular domain of Notch proteins by catalyzing the addition of xylose. This Rattus norvegicus (Rat) protein is Glucoside xylosyltransferase 1 (Gxylt1).